The chain runs to 92 residues: Small cysteine and glycine repeat-containing protein 9 (92 aa).

The interval 4–72 (CGCGSCGCSG…CCRRTCSSCG (69 aa)) is 11 X 2 AA repeats of CG.

The protein belongs to the KRTAP type 28 family.

Its function is as follows. In the hair cortex, hair keratin intermediate filaments are embedded in an interfilamentous matrix, consisting of hair keratin-associated proteins (KRTAP), which are essential for the formation of a rigid and resistant hair shaft through their extensive disulfide bond cross-linking with abundant cysteine residues of hair keratins. The matrix proteins include the high-sulfur and high-glycine-tyrosine keratins. The sequence is that of Small cysteine and glycine repeat-containing protein 9 from Homo sapiens (Human).